The chain runs to 335 residues: MSLDIDQIALHQLIKRDEQNLELVLRESLLEPNATVVEMMAELHRVYSAKSKAYGLFNEESELAQALRLQRQGEEEFLAFSRAATGRLRDELAKYPFAEGGIVLFCQYRYLAVEYLLVAVLNNLSSMRVNEELDIRSTHYLDINHADIVARIDLTEWETNPESTRYLTFLKGRVGRKVADFFMDFLGASEGLNAKAQNRGLLQAVDDFAADAQLDKSERQNVRQQVYAYCNEQLQAGEEIELESLSKELAGVSEKSFQEFTAAQGYELEESFPADRSTLRQLTKFAGSGGGLTINFDAMLLGERVFWDPATDTLTIKGTPPNLRDQLQRRTSGGN.

It belongs to the YejK family.

The protein localises to the cytoplasm. It localises to the nucleoid. The polypeptide is Nucleoid-associated protein KPK_1538 (Klebsiella pneumoniae (strain 342)).